A 713-amino-acid polypeptide reads, in one-letter code: Protein argonaute (713 aa).

The interval 18-129 (EFIPKEVHFY…IKNIRKHKVV (112 aa)) is N-terminal domain. The 94-residue stretch at 164 to 257 (HLWDFVNRDK…FAPQFCNLVF (94 aa)) folds into the PAZ domain. A binds 3'-end of gDNA region spans residues 213 to 218 (HIIKYY). The mid domain stretch occupies residues 346 to 488 (DVPEIIRNKN…QIMGKLGIKY (143 aa)). The Piwi domain occupies 426–699 (CFALIIGKEK…FVKALGKNWK (274 aa)). The a divalent metal cation site is built by Gln457, Gln479, and Lys483. The segment at 457–460 (QNIL) is binds 5'-phosphorylated end of gDNA. Residues Asp504, Glu541, and Asp570 contribute to the active site. Asp504 lines the Mn(2+) pocket. Residue Asp570 participates in Mn(2+) binding. Binds 5'-phosphorylated end of gDNA regions lie at residues 625 to 632 (HKTPFGSN) and 678 to 679 (LR). Asp688 is a catalytic residue. Residues Asp688 and Ile713 each coordinate Mn(2+).

Belongs to the argonaute family. Long pAgo subfamily. A divalent metal cation is required as a cofactor.

DNA cleavage is inhibited by EDTA. Its function is as follows. A DNA-guided ssDNA endonuclease that may play a role in defense against invading genetic elements. Uses short ssDNA sequences as guides (gDNA) to bind complementary target strands, resulting in slicing of the target DNA (tDNA). Endonucleolytically cleaves tDNA (the gDNA indicates where to cleave); two major and two minor products are seen which correspond to cleavage sites between nucleotides 9/10, 10/11, 13/14, and 14/15 downstream of the target residue base-paired with the 5'-end of the gDNA. Efficient guide-dependent tDNA cleavage requires a minimal length of 15 bp and is maximal at 19 bp. Prefers gDNA with 5'-phosphorylated purines and 3'-pyrimidines; changing these bases alters the cleavage activity and patterns. Also has guide-independent activity on tDNA called 'chopping'. Probably a first round of guide-independent activity on an invading plasmid or virus would generate guide DNAs for subsequent, more efficient, guide-dependent degradation of invading nucleic acids. Has no activity on substrate with a mismatch at positions 10 and 11, on ssDNA or RNA, nor on DNA:RNA hybrids. Digests longer (750 bp) dsDNA as well as circular plasmid and naked genomic DNA, but not chromatin, in a guide DNA-independent manner. Addition of endogenous histone A3 protects DNA from cleavage, while cleavage is insensitive to methylation. When plasmid encoding active or mutated protein (Ala-541) is transformed into Sulfolobus acidocaldarius about 25-fold fewer transformants are found with active protein; reduced levels of plasmid are found in wild-type transformed cells. While S.acidocaldarius grows at a similar temperature to M.jannaschii (70 to 80 degrees Celsius) it has very different histone-like proteins, which presumably do not protect against MjAgo. Binds ssDNA, dsDNA and DNA-RNA hybrids; binding is most efficient with dsDNA. This is Protein argonaute from Methanocaldococcus jannaschii (strain ATCC 43067 / DSM 2661 / JAL-1 / JCM 10045 / NBRC 100440) (Methanococcus jannaschii).